Consider the following 635-residue polypeptide: Threonine--tRNA ligase (635 aa).

The 61-residue stretch at 1 to 61 (MTVVRLPDGT…EIDSDLVLIT (61 aa)) folds into the TGS domain. The segment at 242–533 (DHRKLGKQLD…LIEHHAGALP (292 aa)) is catalytic. 3 residues coordinate Zn(2+): Cys-333, His-384, and His-510.

It belongs to the class-II aminoacyl-tRNA synthetase family. Homodimer. The cofactor is Zn(2+).

It localises to the cytoplasm. The enzyme catalyses tRNA(Thr) + L-threonine + ATP = L-threonyl-tRNA(Thr) + AMP + diphosphate + H(+). In terms of biological role, catalyzes the attachment of threonine to tRNA(Thr) in a two-step reaction: L-threonine is first activated by ATP to form Thr-AMP and then transferred to the acceptor end of tRNA(Thr). Also edits incorrectly charged L-seryl-tRNA(Thr). The chain is Threonine--tRNA ligase from Nitrosomonas eutropha (strain DSM 101675 / C91 / Nm57).